Here is a 181-residue protein sequence, read N- to C-terminus: Mitochondrial pyruvate carrier-like protein (181 aa).

2 helical membrane passes run 23-42 (YLAS…PLAA) and 52-74 (IISG…FAYR). The disordered stretch occupies residues 125–154 (TGSVDSSATSTGSVDSSATSTGSVDSSAAT).

Belongs to the mitochondrial pyruvate carrier (MPC) (TC 2.A.105) family.

It localises to the mitochondrion inner membrane. Its function is as follows. May mediate the uptake of pyruvate into mitochondria. The sequence is that of Mitochondrial pyruvate carrier-like protein from Bos taurus (Bovine).